We begin with the raw amino-acid sequence, 185 residues long: Ribosome-recycling factor (185 aa).

The protein belongs to the RRF family.

It is found in the cytoplasm. Functionally, responsible for the release of ribosomes from messenger RNA at the termination of protein biosynthesis. May increase the efficiency of translation by recycling ribosomes from one round of translation to another. The chain is Ribosome-recycling factor from Wolbachia pipientis wMel.